The primary structure comprises 938 residues: Protein NLP3 (938 aa).

Disordered stretches follow at residues 1–26 and 557–597; these read MEVDPSSSLPGAGEGGGGGIGGGGGD and LADD…KAEK. The span at 12–26 shows a compositional bias: gly residues; it reads AGEGGGGGIGGGGGD. Basic and acidic residues predominate over residues 580–597; the sequence is SLHKSNKPPERRRGKAEK. Positions 585-666 constitute an RWP-RK domain; the sequence is NKPPERRRGK…IESVQGSDAA (82 aa). The stretch at 640-662 forms a coiled coil; it reads SRKINKVNRSLSKLKQVIESVQG. Positions 743-769 are disordered; sequence DKASHSRSSSGEGSINSRTSEASCHGS. Over residues 748-762 the composition is skewed to low complexity; the sequence is SRSSSGEGSINSRTS. In terms of domain architecture, PB1 spans 847–926; sequence TVTIKASFKE…HVIRLLVSDV (80 aa).

The protein localises to the nucleus. Its function is as follows. Probable transcription factor. The protein is Protein NLP3 (NLP3) of Oryza sativa subsp. japonica (Rice).